The following is a 520-amino-acid chain: Transactivator/viroplasmin protein (520 aa).

Residues 486–520 (VQDASADSGPKDGPPPTRSIVEKEDVPTTSSKQVD) are disordered.

The protein belongs to the caulimoviridae viroplasmin family.

It is found in the host cytoplasm. In terms of biological role, enhances the ribosomal termination-reinitiation event leading to the translation of major open reading frames on the polycistronic viral RNAs. In Cauliflower mosaic virus (strain BBC) (CaMV), this protein is Transactivator/viroplasmin protein.